A 416-amino-acid chain; its full sequence is MALVLHCGSGNKNAFKALIAAEYTGVKVELTKNFEMGVSNKTPEFLKMNPLGKIPVLETPEGAVFESNAIARYVARLKDNSSLCGSSLIDYSHIEQWMDFSATEVDANIGRWLYPRLGFGPYVPVLEEFAITSLKRSLGALNTHLASNTYLVGHSVTLADIVMTCNLYYGFVRILIKSFTSEFPHVERYFWTMVNQPNFKKVIGDFKQAESVPPVQKKAAPPKESKAKEAKKEAPKEAPKPKVEASEEEEAPKPKPKNPLDLLPPSKMILDEWKRLYSNTKTNFREIAIKGFWDMYDPEGYSLWFCDYKYNDENTVSFVTMNKVGGFLQRMDLCRKYAFGKMLVIGSTPPFKVKGLWLFRGQDIPKFVMDEVYDMELYEWTKVDLSDEAQKERVNAMIEDQEPFEGEDLLDAKCFK.

Residues 1–82 enclose the GST N-terminal domain; sequence MALVLHCGSG…YVARLKDNSS (82 aa). One can recognise a GST C-terminal domain in the interval 87–215; that stretch reads SLIDYSHIEQ…FKQAESVPPV (129 aa). A disordered region spans residues 213–263; sequence PPVQKKAAPPKESKAKEAKKEAPKEAPKPKVEASEEEEAPKPKPKNPLDLL. Basic and acidic residues predominate over residues 221–245; it reads PPKESKAKEAKKEAPKEAPKPKVEA. Positions 256–416 constitute an EF-1-gamma C-terminal domain; the sequence is PKNPLDLLPP…EDLLDAKCFK (161 aa).

In terms of assembly, EF-1 is composed of four subunits: alpha, beta, delta, and gamma.

Probably plays a role in anchoring the complex to other cellular components. This is Elongation factor 1-gamma 3 from Oryza sativa subsp. japonica (Rice).